Reading from the N-terminus, the 185-residue chain is Putative F-box protein At3g17400 (185 aa).

In terms of domain architecture, F-box spans 1 to 47 (MMTLSDLPSDLAEEVLSKIPVTSLRGVRATCKKWNTLSKDRSFTRKH).

This chain is Putative F-box protein At3g17400, found in Arabidopsis thaliana (Mouse-ear cress).